The primary structure comprises 483 residues: Putative (R)-citramalate synthase CimA (483 aa).

A Pyruvate carboxyltransferase domain is found at Met-1–Tyr-245.

It belongs to the alpha-IPM synthase/homocitrate synthase family. Homodimer.

The catalysed reaction is pyruvate + acetyl-CoA + H2O = (3R)-citramalate + CoA + H(+). It participates in amino-acid biosynthesis; L-isoleucine biosynthesis; 2-oxobutanoate from pyruvate: step 1/3. Catalyzes the condensation of pyruvate and acetyl-coenzyme A to form (R)-citramalate. The protein is Putative (R)-citramalate synthase CimA of Methanosarcina mazei (strain ATCC BAA-159 / DSM 3647 / Goe1 / Go1 / JCM 11833 / OCM 88) (Methanosarcina frisia).